The sequence spans 553 residues: Formate--tetrahydrofolate ligase (553 aa).

Residue 56-63 participates in ATP binding; the sequence is TPKGEGKT.

It belongs to the formate--tetrahydrofolate ligase family.

The enzyme catalyses (6S)-5,6,7,8-tetrahydrofolate + formate + ATP = (6R)-10-formyltetrahydrofolate + ADP + phosphate. Its pathway is one-carbon metabolism; tetrahydrofolate interconversion. The chain is Formate--tetrahydrofolate ligase from Haloarcula marismortui (strain ATCC 43049 / DSM 3752 / JCM 8966 / VKM B-1809) (Halobacterium marismortui).